Consider the following 271-residue polypeptide: 5-deoxy-glucuronate isomerase (271 aa).

Belongs to the isomerase IolB family.

The enzyme catalyses 5-deoxy-D-glucuronate = 5-dehydro-2-deoxy-D-gluconate. The protein operates within polyol metabolism; myo-inositol degradation into acetyl-CoA; acetyl-CoA from myo-inositol: step 4/7. Involved in the isomerization of 5-deoxy-glucuronate (5DG) to 5-dehydro-2-deoxy-D-gluconate (DKG or 2-deoxy-5-keto-D-gluconate). This is 5-deoxy-glucuronate isomerase from Lacticaseibacillus casei (Lactobacillus casei).